The chain runs to 152 residues: Deoxyuridine 5'-triphosphate nucleotidohydrolase (152 aa).

Substrate-binding positions include 72 to 74, Asn85, and 89 to 91; these read RSG and TID.

This sequence belongs to the dUTPase family. Mg(2+) serves as cofactor.

It catalyses the reaction dUTP + H2O = dUMP + diphosphate + H(+). Its pathway is pyrimidine metabolism; dUMP biosynthesis; dUMP from dCTP (dUTP route): step 2/2. Its function is as follows. This enzyme is involved in nucleotide metabolism: it produces dUMP, the immediate precursor of thymidine nucleotides and it decreases the intracellular concentration of dUTP so that uracil cannot be incorporated into DNA. This chain is Deoxyuridine 5'-triphosphate nucleotidohydrolase, found in Rhodopseudomonas palustris (strain BisB18).